A 163-amino-acid chain; its full sequence is NADH-quinone oxidoreductase subunit I (163 aa).

4Fe-4S ferredoxin-type domains lie at 54–84 (LRRY…IESD) and 94–123 (TRYD…ETQI). [4Fe-4S] cluster-binding residues include Cys-64, Cys-67, Cys-70, Cys-74, Cys-103, Cys-106, Cys-109, and Cys-113.

This sequence belongs to the complex I 23 kDa subunit family. As to quaternary structure, NDH-1 is composed of 14 different subunits. Subunits NuoA, H, J, K, L, M, N constitute the membrane sector of the complex. Requires [4Fe-4S] cluster as cofactor.

It is found in the cell inner membrane. The enzyme catalyses a quinone + NADH + 5 H(+)(in) = a quinol + NAD(+) + 4 H(+)(out). In terms of biological role, NDH-1 shuttles electrons from NADH, via FMN and iron-sulfur (Fe-S) centers, to quinones in the respiratory chain. The immediate electron acceptor for the enzyme in this species is believed to be ubiquinone. Couples the redox reaction to proton translocation (for every two electrons transferred, four hydrogen ions are translocated across the cytoplasmic membrane), and thus conserves the redox energy in a proton gradient. The chain is NADH-quinone oxidoreductase subunit I from Cupriavidus necator (strain ATCC 17699 / DSM 428 / KCTC 22496 / NCIMB 10442 / H16 / Stanier 337) (Ralstonia eutropha).